A 417-amino-acid polypeptide reads, in one-letter code: Phosphoglycerate kinase, cytosolic (417 aa).

(2R)-3-phosphoglycerate-binding residues include V23, D24, F25, N26, R39, S61, H62, G64, R65, R132, H168, and R169. 2 residues coordinate ADP: G214 and A215. A CDP-binding site is contributed by G214. AMP is bound by residues A215 and K216. Residue A215 coordinates ATP. Residue A215 coordinates Mg(2+). Residue K216 participates in (2R)-3-phosphoglycerate binding. D219 is a CDP binding site. Residue D219 participates in Mg(2+) binding. ADP contacts are provided by K220 and G238. K220 contacts AMP. ATP is bound at residue K220. G238 serves as a coordination point for CDP. A239 and A311 together coordinate AMP. A239 and A311 together coordinate ATP. 2 residues coordinate ADP: A311 and N335. CDP-binding residues include G336 and F341. F341, E342, D374, and T375 together coordinate ADP. AMP is bound at residue E342. The ATP site is built by E342, D374, and T375. D374 is a binding site for Mg(2+).

Belongs to the phosphoglycerate kinase family. In terms of assembly, monomer. Mg(2+) is required as a cofactor.

The protein resides in the cytoplasm. The enzyme catalyses (2R)-3-phosphoglycerate + ATP = (2R)-3-phospho-glyceroyl phosphate + ADP. It participates in carbohydrate degradation; glycolysis; pyruvate from D-glyceraldehyde 3-phosphate: step 2/5. The sequence is that of Phosphoglycerate kinase, cytosolic (PGKB) from Crithidia fasciculata.